The primary structure comprises 373 residues: Dual-specificity RNA methyltransferase RlmN (373 aa).

The Proton acceptor role is filled by glutamate 94. One can recognise a Radical SAM core domain in the interval 100–339; it reads EDDRATLCVS…VIVRKTRGDD (240 aa). Cysteines 107 and 344 form a disulfide. Cysteine 114, cysteine 118, and cysteine 121 together coordinate [4Fe-4S] cluster. Residues 168 to 169, serine 200, 222 to 224, and asparagine 301 each bind S-adenosyl-L-methionine; these read GE and SIH. Cysteine 344 acts as the S-methylcysteine intermediate in catalysis.

It belongs to the radical SAM superfamily. RlmN family. Requires [4Fe-4S] cluster as cofactor.

It is found in the cytoplasm. The catalysed reaction is adenosine(2503) in 23S rRNA + 2 reduced [2Fe-2S]-[ferredoxin] + 2 S-adenosyl-L-methionine = 2-methyladenosine(2503) in 23S rRNA + 5'-deoxyadenosine + L-methionine + 2 oxidized [2Fe-2S]-[ferredoxin] + S-adenosyl-L-homocysteine. The enzyme catalyses adenosine(37) in tRNA + 2 reduced [2Fe-2S]-[ferredoxin] + 2 S-adenosyl-L-methionine = 2-methyladenosine(37) in tRNA + 5'-deoxyadenosine + L-methionine + 2 oxidized [2Fe-2S]-[ferredoxin] + S-adenosyl-L-homocysteine. Functionally, specifically methylates position 2 of adenine 2503 in 23S rRNA and position 2 of adenine 37 in tRNAs. m2A2503 modification seems to play a crucial role in the proofreading step occurring at the peptidyl transferase center and thus would serve to optimize ribosomal fidelity. The chain is Dual-specificity RNA methyltransferase RlmN from Shewanella denitrificans (strain OS217 / ATCC BAA-1090 / DSM 15013).